The sequence spans 181 residues: Photosystem I assembly protein Ycf4 (181 aa).

2 consecutive transmembrane segments (helical) span residues Y19 to S39 and I61 to L81.

Belongs to the Ycf4 family.

The protein resides in the plastid. It is found in the chloroplast thylakoid membrane. In terms of biological role, seems to be required for the assembly of the photosystem I complex. This is Photosystem I assembly protein Ycf4 from Thalassiosira pseudonana (Marine diatom).